Here is a 202-residue protein sequence, read N- to C-terminus: Segregation and condensation protein B (202 aa).

The protein belongs to the ScpB family. Homodimer. Homodimerization may be required to stabilize the binding of ScpA to the Smc head domains. Component of a cohesin-like complex composed of ScpA, ScpB and the Smc homodimer, in which ScpA and ScpB bind to the head domain of Smc. The presence of the three proteins is required for the association of the complex with DNA.

It localises to the cytoplasm. Functionally, participates in chromosomal partition during cell division. May act via the formation of a condensin-like complex containing Smc and ScpA that pull DNA away from mid-cell into both cell halves. This is Segregation and condensation protein B from Clostridium acetobutylicum (strain ATCC 824 / DSM 792 / JCM 1419 / IAM 19013 / LMG 5710 / NBRC 13948 / NRRL B-527 / VKM B-1787 / 2291 / W).